We begin with the raw amino-acid sequence, 307 residues long: MLQQRTIKTITRAVGVGLHSGQRVELTLRPAQPDTGIVFRRVDLPEPVDIPISAEAVTDTRMASTIGTGGAKVHTVEHLMSAIAGLGLDNIYIDITAEEVPILDGSSASFVFLLQSAGIELQKAPKRFIRVIRPVEVREGEGQNLKWARFDPYHGFKLRFEIDFAHPAVDSTGQCVEFDMGEDNYTRDIARARTFGFTKDVEMLRSHGLALGGGMDNAIVMDDYKVLNSDGLRYDDEFAKHKILDAIGDLYLIGRPLLAAYSAFRSGHGMNNQLLRALLAQPDAWELVSFDSERQAPKGFAQPARAW.

His78, His241, and Asp245 together coordinate Zn(2+). The active-site Proton donor is His268.

Belongs to the LpxC family. The cofactor is Zn(2+).

The enzyme catalyses a UDP-3-O-[(3R)-3-hydroxyacyl]-N-acetyl-alpha-D-glucosamine + H2O = a UDP-3-O-[(3R)-3-hydroxyacyl]-alpha-D-glucosamine + acetate. It participates in glycolipid biosynthesis; lipid IV(A) biosynthesis; lipid IV(A) from (3R)-3-hydroxytetradecanoyl-[acyl-carrier-protein] and UDP-N-acetyl-alpha-D-glucosamine: step 2/6. Functionally, catalyzes the hydrolysis of UDP-3-O-myristoyl-N-acetylglucosamine to form UDP-3-O-myristoylglucosamine and acetate, the committed step in lipid A biosynthesis. The protein is UDP-3-O-acyl-N-acetylglucosamine deacetylase of Delftia acidovorans (strain DSM 14801 / SPH-1).